Consider the following 138-residue polypeptide: ATP synthase epsilon chain (138 aa).

The tract at residues 88-119 (DREEARSTLSAAQARLDQSEQSEDKQERYEAQ) is disordered. Positions 109–119 (SEDKQERYEAQ) are enriched in basic and acidic residues.

This sequence belongs to the ATPase epsilon chain family. F-type ATPases have 2 components, CF(1) - the catalytic core - and CF(0) - the membrane proton channel. CF(1) has five subunits: alpha(3), beta(3), gamma(1), delta(1), epsilon(1). CF(0) has three main subunits: a, b and c.

It is found in the cellular thylakoid membrane. Its function is as follows. Produces ATP from ADP in the presence of a proton gradient across the membrane. The chain is ATP synthase epsilon chain from Acaryochloris marina (strain MBIC 11017).